We begin with the raw amino-acid sequence, 215 residues long: 3-demethoxyubiquinol 3-hydroxylase (215 aa).

The Fe cation site is built by E64, E94, H97, E146, E178, and H181.

It belongs to the COQ7 family. Fe cation is required as a cofactor.

The protein resides in the cell membrane. The catalysed reaction is a 5-methoxy-2-methyl-3-(all-trans-polyprenyl)benzene-1,4-diol + AH2 + O2 = a 3-demethylubiquinol + A + H2O. It functions in the pathway cofactor biosynthesis; ubiquinone biosynthesis. Catalyzes the hydroxylation of 2-nonaprenyl-3-methyl-6-methoxy-1,4-benzoquinol during ubiquinone biosynthesis. This chain is 3-demethoxyubiquinol 3-hydroxylase, found in Stutzerimonas stutzeri (strain A1501) (Pseudomonas stutzeri).